We begin with the raw amino-acid sequence, 166 residues long: Thiol peroxidase (166 aa).

One can recognise a Thioredoxin domain in the interval Leu18–Lys166. Cys60 acts as the Cysteine sulfenic acid (-SOH) intermediate in catalysis. Cys60 and Cys94 are oxidised to a cystine.

This sequence belongs to the peroxiredoxin family. Tpx subfamily. In terms of assembly, homodimer.

It carries out the reaction a hydroperoxide + [thioredoxin]-dithiol = an alcohol + [thioredoxin]-disulfide + H2O. Thiol-specific peroxidase that catalyzes the reduction of hydrogen peroxide and organic hydroperoxides to water and alcohols, respectively. Plays a role in cell protection against oxidative stress by detoxifying peroxides. This chain is Thiol peroxidase, found in Helicobacter pylori (strain ATCC 700392 / 26695) (Campylobacter pylori).